The chain runs to 406 residues: Putative competence-damage inducible protein (406 aa).

The protein belongs to the CinA family.

In Natranaerobius thermophilus (strain ATCC BAA-1301 / DSM 18059 / JW/NM-WN-LF), this protein is Putative competence-damage inducible protein.